Consider the following 430-residue polypeptide: Enolase (430 aa).

(2R)-2-phosphoglycerate is bound at residue glutamine 167. The Proton donor role is filled by glutamate 209. 3 residues coordinate Mg(2+): aspartate 246, glutamate 289, and aspartate 316. Residues lysine 341, arginine 370, serine 371, and lysine 392 each coordinate (2R)-2-phosphoglycerate. Lysine 341 functions as the Proton acceptor in the catalytic mechanism.

The protein belongs to the enolase family. As to quaternary structure, component of the RNA degradosome, a multiprotein complex involved in RNA processing and mRNA degradation. Mg(2+) serves as cofactor.

It localises to the cytoplasm. The protein resides in the secreted. It is found in the cell surface. It carries out the reaction (2R)-2-phosphoglycerate = phosphoenolpyruvate + H2O. It participates in carbohydrate degradation; glycolysis; pyruvate from D-glyceraldehyde 3-phosphate: step 4/5. In terms of biological role, catalyzes the reversible conversion of 2-phosphoglycerate (2-PG) into phosphoenolpyruvate (PEP). It is essential for the degradation of carbohydrates via glycolysis. In Idiomarina loihiensis (strain ATCC BAA-735 / DSM 15497 / L2-TR), this protein is Enolase.